We begin with the raw amino-acid sequence, 530 residues long: Phosphoenolpyruvate carboxykinase (ATP) (530 aa).

The substrate site is built by Arg-58, Tyr-195, and Lys-201. Residues Lys-201, His-220, and 236 to 244 (GLSGTGKTT) contribute to the ATP site. The Mn(2+) site is built by Lys-201 and His-220. Asp-257 contacts Mn(2+). Residues Glu-285, Arg-321, 440 to 441 (RI), and Thr-446 each bind ATP. Position 321 (Arg-321) interacts with substrate.

The protein belongs to the phosphoenolpyruvate carboxykinase (ATP) family. It depends on Mn(2+) as a cofactor.

The protein resides in the cytoplasm. It catalyses the reaction oxaloacetate + ATP = phosphoenolpyruvate + ADP + CO2. Its pathway is carbohydrate biosynthesis; gluconeogenesis. Its function is as follows. Involved in the gluconeogenesis. Catalyzes the conversion of oxaloacetate (OAA) to phosphoenolpyruvate (PEP) through direct phosphoryl transfer between the nucleoside triphosphate and OAA. The protein is Phosphoenolpyruvate carboxykinase (ATP) of Staphylococcus epidermidis (strain ATCC 12228 / FDA PCI 1200).